A 375-amino-acid chain; its full sequence is Carbamoyl phosphate synthase small chain (375 aa).

A CPSase region spans residues 1–186; it reads MKAILALEDG…IVDGTYAWPG (186 aa). Positions 45, 238, and 240 each coordinate L-glutamine. The Glutamine amidotransferase type-1 domain maps to 190–375; it reads RLVVFDMGIK…RNLVRKETGK (186 aa). Cys-265 functions as the Nucleophile in the catalytic mechanism. L-glutamine contacts are provided by Leu-266, Gln-269, Asn-307, Gly-309, and Phe-310. Residues His-348 and Glu-350 contribute to the active site.

The protein belongs to the CarA family. As to quaternary structure, composed of two chains; the small (or glutamine) chain promotes the hydrolysis of glutamine to ammonia, which is used by the large (or ammonia) chain to synthesize carbamoyl phosphate. Tetramer of heterodimers (alpha,beta)4.

It carries out the reaction hydrogencarbonate + L-glutamine + 2 ATP + H2O = carbamoyl phosphate + L-glutamate + 2 ADP + phosphate + 2 H(+). The catalysed reaction is L-glutamine + H2O = L-glutamate + NH4(+). Its pathway is amino-acid biosynthesis; L-arginine biosynthesis; carbamoyl phosphate from bicarbonate: step 1/1. The protein operates within pyrimidine metabolism; UMP biosynthesis via de novo pathway; (S)-dihydroorotate from bicarbonate: step 1/3. In terms of biological role, small subunit of the glutamine-dependent carbamoyl phosphate synthetase (CPSase). CPSase catalyzes the formation of carbamoyl phosphate from the ammonia moiety of glutamine, carbonate, and phosphate donated by ATP, constituting the first step of 2 biosynthetic pathways, one leading to arginine and/or urea and the other to pyrimidine nucleotides. The small subunit (glutamine amidotransferase) binds and cleaves glutamine to supply the large subunit with the substrate ammonia. The chain is Carbamoyl phosphate synthase small chain from Solidesulfovibrio magneticus (strain ATCC 700980 / DSM 13731 / RS-1) (Desulfovibrio magneticus).